The chain runs to 69 residues: Beta-defensin 43 (69 aa).

The N-terminal stretch at Met-1–Ser-22 is a signal peptide. 2 cysteine pairs are disulfide-bonded: Cys-29–Cys-56 and Cys-35–Cys-49.

This sequence belongs to the beta-defensin family.

The protein localises to the secreted. Its function is as follows. Has bactericidal activity. This Mus musculus (Mouse) protein is Beta-defensin 43 (Defb43).